The following is a 238-amino-acid chain: Ribitol-5-phosphate cytidylyltransferase 1 (238 aa).

CTP contacts are provided by residues 7–10 (LAGG) and 81–87 (GSDRNDT).

It belongs to the IspD/TarI cytidylyltransferase family. TarI subfamily.

The enzyme catalyses D-ribitol 5-phosphate + CTP + H(+) = CDP-L-ribitol + diphosphate. It participates in cell wall biogenesis; poly(ribitol phosphate) teichoic acid biosynthesis. In terms of biological role, catalyzes the transfer of the cytidylyl group of CTP to D-ribitol 5-phosphate. This Staphylococcus aureus (strain bovine RF122 / ET3-1) protein is Ribitol-5-phosphate cytidylyltransferase 1.